We begin with the raw amino-acid sequence, 208 residues long: N-(5'-phosphoribosyl)anthranilate isomerase (208 aa).

It belongs to the TrpF family.

The catalysed reaction is N-(5-phospho-beta-D-ribosyl)anthranilate = 1-(2-carboxyphenylamino)-1-deoxy-D-ribulose 5-phosphate. It participates in amino-acid biosynthesis; L-tryptophan biosynthesis; L-tryptophan from chorismate: step 3/5. In Neisseria gonorrhoeae (strain NCCP11945), this protein is N-(5'-phosphoribosyl)anthranilate isomerase.